The chain runs to 428 residues: Glutamate-1-semialdehyde 2,1-aminomutase (428 aa).

Lysine 265 carries the post-translational modification N6-(pyridoxal phosphate)lysine.

The protein belongs to the class-III pyridoxal-phosphate-dependent aminotransferase family. HemL subfamily. As to quaternary structure, homodimer. Requires pyridoxal 5'-phosphate as cofactor.

Its subcellular location is the cytoplasm. It catalyses the reaction (S)-4-amino-5-oxopentanoate = 5-aminolevulinate. It functions in the pathway porphyrin-containing compound metabolism; protoporphyrin-IX biosynthesis; 5-aminolevulinate from L-glutamyl-tRNA(Glu): step 2/2. The chain is Glutamate-1-semialdehyde 2,1-aminomutase from Vesicomyosocius okutanii subsp. Calyptogena okutanii (strain HA).